A 98-amino-acid polypeptide reads, in one-letter code: HssA/B-like protein 39 (98 aa).

Residues 1-21 (MTLFSSISSMSTSMSGSKSSI) form a disordered region.

Belongs to the hssA/B family.

The polypeptide is HssA/B-like protein 39 (hssl39) (Dictyostelium discoideum (Social amoeba)).